Reading from the N-terminus, the 264-residue chain is Indole-3-glycerol phosphate synthase (264 aa).

The protein belongs to the TrpC family.

It catalyses the reaction 1-(2-carboxyphenylamino)-1-deoxy-D-ribulose 5-phosphate + H(+) = (1S,2R)-1-C-(indol-3-yl)glycerol 3-phosphate + CO2 + H2O. Its pathway is amino-acid biosynthesis; L-tryptophan biosynthesis; L-tryptophan from chorismate: step 4/5. This is Indole-3-glycerol phosphate synthase from Stenotrophomonas maltophilia (strain K279a).